We begin with the raw amino-acid sequence, 88 residues long: Large ribosomal subunit protein eL37A (88 aa).

Residues C19, C22, C34, and C37 each coordinate Zn(2+). The segment at 19-37 (CNRCGRRSFHVQKKTCSSC) adopts a C4-type zinc-finger fold.

It belongs to the eukaryotic ribosomal protein eL37 family. Component of the large ribosomal subunit (LSU). Mature yeast ribosomes consist of a small (40S) and a large (60S) subunit. The 40S small subunit contains 1 molecule of ribosomal RNA (18S rRNA) and 33 different proteins (encoded by 57 genes). The large 60S subunit contains 3 rRNA molecules (25S, 5.8S and 5S rRNA) and 46 different proteins (encoded by 81 genes). The cofactor is Zn(2+).

Its subcellular location is the cytoplasm. In terms of biological role, component of the ribosome, a large ribonucleoprotein complex responsible for the synthesis of proteins in the cell. The small ribosomal subunit (SSU) binds messenger RNAs (mRNAs) and translates the encoded message by selecting cognate aminoacyl-transfer RNA (tRNA) molecules. The large subunit (LSU) contains the ribosomal catalytic site termed the peptidyl transferase center (PTC), which catalyzes the formation of peptide bonds, thereby polymerizing the amino acids delivered by tRNAs into a polypeptide chain. The nascent polypeptides leave the ribosome through a tunnel in the LSU and interact with protein factors that function in enzymatic processing, targeting, and the membrane insertion of nascent chains at the exit of the ribosomal tunnel. The protein is Large ribosomal subunit protein eL37A of Saccharomyces cerevisiae (strain ATCC 204508 / S288c) (Baker's yeast).